The following is a 396-amino-acid chain: Argininosuccinate synthase (396 aa).

Residue 6-14 participates in ATP binding; that stretch reads AYSGGLDTS. Tyr83 contacts L-citrulline. Gly113 provides a ligand contact to ATP. Residues Thr115, Asn119, and Asp120 each coordinate L-aspartate. Asn119 is a binding site for L-citrulline. L-citrulline contacts are provided by Arg123, Ser171, Ser180, Glu256, and Tyr268.

Belongs to the argininosuccinate synthase family. Type 1 subfamily. Homotetramer.

The protein localises to the cytoplasm. The enzyme catalyses L-citrulline + L-aspartate + ATP = 2-(N(omega)-L-arginino)succinate + AMP + diphosphate + H(+). It participates in amino-acid biosynthesis; L-arginine biosynthesis; L-arginine from L-ornithine and carbamoyl phosphate: step 2/3. This is Argininosuccinate synthase from Hyperthermus butylicus (strain DSM 5456 / JCM 9403 / PLM1-5).